A 457-amino-acid polypeptide reads, in one-letter code: Proton-translocating ferredoxin:NAD(+) oxidoreductase complex subunit C (457 aa).

4Fe-4S ferredoxin-type domains lie at 353 to 386 and 396 to 427; these read TKND…MLSI and AKEE…YIRY. 8 residues coordinate [4Fe-4S] cluster: Cys365, Cys368, Cys371, Cys375, Cys405, Cys408, Cys411, and Cys415. The segment at 433–457 is disordered; that stretch reads RAAGEREKAKAAKAKEKKEKEEVLK.

Belongs to the 4Fe4S bacterial-type ferredoxin family. RnfC subfamily. As to quaternary structure, the complex is composed of six subunits: RnfA, RnfB, RnfC, RnfD, RnfE and RnfG. Requires [4Fe-4S] cluster as cofactor.

It localises to the cell membrane. Functionally, part of a membrane-bound complex that couples electron transfer with translocation of ions across the membrane. Couples electron transfer from reduced ferredoxin to NAD(+) with translocation of H(+) out of the cell. Essential for energy conservation during autotrophic growth. Contributes to ATP synthesis during heterotrophic growth. This is Proton-translocating ferredoxin:NAD(+) oxidoreductase complex subunit C from Clostridium ljungdahlii (strain ATCC 55383 / DSM 13528 / PETC).